Consider the following 282-residue polypeptide: D-alanine aminotransferase (282 aa).

Y32 provides a ligand contact to substrate. Position 51 (R51) interacts with pyridoxal 5'-phosphate. 2 residues coordinate substrate: R99 and H101. Catalysis depends on K146, which acts as the Proton acceptor. K146 is subject to N6-(pyridoxal phosphate)lysine. E178 provides a ligand contact to pyridoxal 5'-phosphate.

It belongs to the class-IV pyridoxal-phosphate-dependent aminotransferase family. In terms of assembly, homodimer. Pyridoxal 5'-phosphate serves as cofactor.

The catalysed reaction is D-alanine + 2-oxoglutarate = D-glutamate + pyruvate. In terms of biological role, acts on the D-isomers of alanine, leucine, aspartate, glutamate, aminobutyrate, norvaline and asparagine. The enzyme transfers an amino group from a substrate D-amino acid to the pyridoxal phosphate cofactor to form pyridoxamine and an alpha-keto acid in the first half-reaction. The second half-reaction is the reverse of the first, transferring the amino group from the pyridoxamine to a second alpha-keto acid to form the product D-amino acid via a ping-pong mechanism. This is an important process in the formation of D-alanine and D-glutamate, which are essential bacterial cell wall components. The chain is D-alanine aminotransferase (dat) from Staphylococcus aureus (strain MSSA476).